The sequence spans 172 residues: Large ribosomal subunit protein uL16 (172 aa).

The protein belongs to the universal ribosomal protein uL16 family.

The polypeptide is Large ribosomal subunit protein uL16 (Methanocella arvoryzae (strain DSM 22066 / NBRC 105507 / MRE50)).